Reading from the N-terminus, the 304-residue chain is Proline dehydrogenase 2 (304 aa).

Lys97 is a binding site for substrate. Residue Asp131 is part of the active site. FAD-binding residues include Met132 and Gln160. The active site involves Arg181. Residues 184–186 (KGA) and 223–224 (TH) contribute to the FAD site. Position 285-286 (285-286 (RR)) interacts with substrate.

The protein belongs to the proline dehydrogenase family. It depends on FAD as a cofactor.

The enzyme catalyses L-proline + a quinone = (S)-1-pyrroline-5-carboxylate + a quinol + H(+). The protein operates within amino-acid degradation; L-proline degradation into L-glutamate; L-glutamate from L-proline: step 1/2. Converts proline to delta-1-pyrroline-5-carboxylate. The protein is Proline dehydrogenase 2 of Bacillus subtilis subsp. natto.